Consider the following 348-residue polypeptide: Sex-lethal homolog (348 aa).

RRM domains are found at residues 110–188 (TNLI…YARP) and 196–276 (TNLY…LAEE). The segment covering 296–310 (GGGGGGGGGGGGGMG) has biased composition (gly residues). Positions 296-317 (GGGGGGGGGGGGGMGGPPPPPM) are disordered.

The protein resides in the nucleus. Its function is as follows. Unknown; apparently not involved in somatic sex determination. The polypeptide is Sex-lethal homolog (SXL) (Ceratitis capitata (Mediterranean fruit fly)).